A 121-amino-acid polypeptide reads, in one-letter code: Large ribosomal subunit protein bL19 (121 aa).

Belongs to the bacterial ribosomal protein bL19 family.

Functionally, this protein is located at the 30S-50S ribosomal subunit interface and may play a role in the structure and function of the aminoacyl-tRNA binding site. This is Large ribosomal subunit protein bL19 (rplS) from Chlamydia muridarum (strain MoPn / Nigg).